An 897-amino-acid polypeptide reads, in one-letter code: Echinoderm microtubule-associated protein-like 3 (897 aa).

M1 is subject to N-acetylmethionine. A coiled-coil region spans residues 16–43 (LQTLSQRLRVQEEEMELVKAALAEALRL). The span at 51–68 (TTLQGSGISAPTRNSSIT) shows a compositional bias: polar residues. Residues 51–210 (TTLQGSGISA…GGPGSRRSNY (160 aa)) are disordered. Composition is skewed to low complexity over residues 96 to 108 (PSSG…NGPP), 118 to 132 (SGTQ…SSGA), and 155 to 164 (RNSSSSSSPS). Polar residues predominate over residues 175 to 190 (AASSANLLLRSGSTES). Residues S177, S199, and S205 each carry the phosphoserine modification. WD repeat units lie at residues 235–287 (RSLE…LYRP), 296–345 (GGGQ…IWDS), 351–393 (LQEI…VWDC), 399–435 (LAEI…FWNW), 449–488 (RKQG…TWGR), 505–544 (YTIV…QWGP), 550–585 (QEAE…LRGD), 590–627 (FSPV…LWDG), 630–668 (HALA…VLDT), 675–710 (SDVT…IYSV), 717–756 (SSRF…YWDV), 766–824 (RYES…LFQY), and 831–870 (APSR…QWRV). Positions 876–897 (SGPAPATPSRTPSLSPASSLDV) are disordered. T882 bears the Phosphothreonine; by CDK1 mark. Residues 883–897 (PSRTPSLSPASSLDV) show a composition bias toward polar residues. S884 carries the phosphoserine modification.

This sequence belongs to the WD repeat EMAP family. In terms of assembly, homotrimer; self-association is mediated by the N-terminal coiled coil. Interacts with EML2 but not with EML1. Interacts (phosphorylated at Thr-882) with TUBG1, HAUS1, HAUS2, HAUS3, HAUS4, HAUS5, HAUS6, HAUS7 and HAUS8. Phosphorylation at Thr-882 during mitosis is required for interaction with TUBG1, HAUS1, HAUS2, HAUS3, HAUS4, HAUS5, HAUS6, HAUS7 and HAUS8 and their recruitment to spindle microtubules.

It is found in the cytoplasm. The protein localises to the cytoskeleton. The protein resides in the nucleus. Its subcellular location is the midbody. It localises to the spindle. Functionally, regulates mitotic spindle assembly, microtubule (MT)-kinetochore attachment and chromosome separation via recruitment of HAUS augmin-like complex and TUBG1 to the existing MTs and promoting MT-based MT nucleation. Required for proper alignnment of chromosomes during metaphase. The chain is Echinoderm microtubule-associated protein-like 3 (Eml3) from Mus musculus (Mouse).